A 396-amino-acid polypeptide reads, in one-letter code: Protein btn1 (396 aa).

A run of 8 helical transmembrane segments spans residues Cys-15–Leu-35, Gly-45–Leu-65, Ile-76–Val-96, Leu-138–Val-158, Thr-161–Pro-181, Phe-234–Pro-254, Leu-296–Thr-316, and Phe-321–Tyr-341.

The protein belongs to the battenin family.

It localises to the endoplasmic reticulum membrane. Its subcellular location is the vacuole membrane. Functionally, involved in vacuolar transport and vacuole pH homeostasis. Also required for cytokinesis. In Schizosaccharomyces pombe (strain 972 / ATCC 24843) (Fission yeast), this protein is Protein btn1.